We begin with the raw amino-acid sequence, 530 residues long: Chondroitin sulfate N-acetylgalactosaminyltransferase 1 (530 aa).

The Cytoplasmic segment spans residues 1–12; that stretch reads MVRRGLLGWISR. The chain crosses the membrane as a helical; Signal-anchor for type II membrane protein span at residues 13 to 33; it reads VVILLVLLCCAISVLYMLACT. At 34-530 the chain is on the lumenal side; it reads PKGDQEQLGL…QKQKASSKKT (497 aa). Residues 57–93 adopt a coiled-coil conformation; the sequence is AVLQEREEQHRNYVNSLKRQIAQLKDELQARSEQFRS. The interval 88–107 is disordered; sequence SEQFRSGQDQASDATSLRSG. Over residues 91-105 the composition is skewed to polar residues; the sequence is FRSGQDQASDATSLR. 2 N-linked (GlcNAc...) asparagine glycosylation sites follow: N313 and N322. The a divalent metal cation site is built by D358 and H475.

The protein belongs to the chondroitin N-acetylgalactosaminyltransferase family.

Its subcellular location is the golgi apparatus. The protein resides in the golgi stack membrane. The enzyme catalyses 3-O-(beta-D-GlcA-(1-&gt;3)-beta-D-Gal-(1-&gt;3)-beta-D-Gal-(1-&gt;4)-beta-D-Xyl)-L-seryl-[protein] + UDP-N-acetyl-alpha-D-galactosamine = 3-O-(beta-D-GalNAc-(1-&gt;4)-beta-D-GlcA-(1-&gt;3)-beta-D-Gal-(1-&gt;3)-beta-D-Gal-(1-&gt;4)-beta-D-Xyl)-L-seryl-[protein] + UDP + H(+). Transfers 1,4-N-acetylgalactosamine (GalNAc) from UDP-GalNAc to the non-reducing end of glucuronic acid (GlcUA). Required for addition of the first GalNAc to the core tetrasaccharide linker and for elongation of chondroitin chains. Important role in chondroitin chain biosynthesis in cartilage formation, and subsequent endochondral ossification. Moreover, is involved in the metabolism of aggrecan. The chain is Chondroitin sulfate N-acetylgalactosaminyltransferase 1 from Mus musculus (Mouse).